The sequence spans 348 residues: Phage-like element PBSX protein XkdT (348 aa).

The protein belongs to the Mu gp47/PBSX XkdT family.

This chain is Phage-like element PBSX protein XkdT (xkdT), found in Bacillus subtilis (strain 168).